The sequence spans 154 residues: Myoglobin (154 aa).

Positions 2 to 148 (GLSDGEWQLV…FRNDMAAKYK (147 aa)) constitute a Globin domain. A Phosphoserine modification is found at serine 4. Residue histidine 65 participates in nitrite binding. Residue histidine 65 participates in O2 binding. Threonine 68 is modified (phosphothreonine). Residue histidine 94 participates in heme b binding.

This sequence belongs to the globin family. In terms of assembly, monomeric.

The protein resides in the cytoplasm. Its subcellular location is the sarcoplasm. The catalysed reaction is Fe(III)-heme b-[protein] + nitric oxide + H2O = Fe(II)-heme b-[protein] + nitrite + 2 H(+). It catalyses the reaction H2O2 + AH2 = A + 2 H2O. Functionally, monomeric heme protein which primary function is to store oxygen and facilitate its diffusion within muscle tissues. Reversibly binds oxygen through a pentacoordinated heme iron and enables its timely and efficient release as needed during periods of heightened demand. Depending on the oxidative conditions of tissues and cells, and in addition to its ability to bind oxygen, it also has a nitrite reductase activity whereby it regulates the production of bioactive nitric oxide. Under stress conditions, like hypoxia and anoxia, it also protects cells against reactive oxygen species thanks to its pseudoperoxidase activity. This chain is Myoglobin (MB), found in Aotus trivirgatus (Three-striped night monkey).